Here is a 270-residue protein sequence, read N- to C-terminus: B3 domain-containing protein Os03g0212300 (270 aa).

2 consecutive DNA-binding regions (TF-B3) follow at residues 13–110 (FEFF…FDET) and 158–265 (VTLR…RKAD).

The protein localises to the nucleus. This Oryza sativa subsp. japonica (Rice) protein is B3 domain-containing protein Os03g0212300.